The sequence spans 276 residues: NH(3)-dependent NAD(+) synthetase (276 aa).

Position 43–50 (43–50 (GISGGVDS)) interacts with ATP. Asp-49 is a binding site for Mg(2+). Arg-146 contacts deamido-NAD(+). An ATP-binding site is contributed by Thr-166. Glu-171 serves as a coordination point for Mg(2+). Deamido-NAD(+) is bound by residues Lys-179 and Asp-186. The ATP site is built by Lys-195 and Thr-217. 266–267 (HK) serves as a coordination point for deamido-NAD(+).

It belongs to the NAD synthetase family. As to quaternary structure, homodimer.

The enzyme catalyses deamido-NAD(+) + NH4(+) + ATP = AMP + diphosphate + NAD(+) + H(+). It functions in the pathway cofactor biosynthesis; NAD(+) biosynthesis; NAD(+) from deamido-NAD(+) (ammonia route): step 1/1. Its function is as follows. Catalyzes the ATP-dependent amidation of deamido-NAD to form NAD. Uses ammonia as a nitrogen source. The sequence is that of NH(3)-dependent NAD(+) synthetase from Shewanella frigidimarina (strain NCIMB 400).